We begin with the raw amino-acid sequence, 188 residues long: Deoxyuridine 5'-triphosphate nucleotidohydrolase (188 aa).

Residues 1–34 (MGEMTSGVDGHGSTKRTTSEAQKMDFNTDRGSAI) are disordered.

It belongs to the dUTPase family. It depends on Mg(2+) as a cofactor.

It catalyses the reaction dUTP + H2O = dUMP + diphosphate + H(+). Its function is as follows. This enzyme is involved in nucleotide metabolism: it produces dUMP, the immediate precursor of thymidine nucleotides and it decreases the intracellular concentration of dUTP so that uracil cannot be incorporated into DNA. The sequence is that of Deoxyuridine 5'-triphosphate nucleotidohydrolase (49) from Ictaluridae (bullhead catfishes).